A 358-amino-acid chain; its full sequence is Dynein axonemal assembly factor 10 (358 aa).

6 WD repeats span residues 63 to 105 (EKKH…QPVF), 109 to 154 (AHAS…APVA), 162 to 205 (NNVR…VRWE), 207 to 249 (NVRN…PKKG), 258 to 298 (TAGA…QRKV), and 320 to 358 (ISTQPVAGFDWSPDKEGLFACVAFDQAVRVGIVTKLNKV).

As to quaternary structure, interacts with PIH1D1; the interaction associates DNAAF10 with the R2TP complex. Interacts with several dynein axonemal assembly factors.

The protein localises to the dynein axonemal particle. In terms of biological role, key assembly factor specifically required for the stability of axonemal dynein heavy chains in cytoplasm. The protein is Dynein axonemal assembly factor 10 (dnaaf10) of Chlamydomonas reinhardtii (Chlamydomonas smithii).